Consider the following 340-residue polypeptide: Phosphoribosylformylglycinamidine cyclo-ligase (340 aa).

The protein belongs to the AIR synthase family.

It localises to the cytoplasm. The catalysed reaction is 2-formamido-N(1)-(5-O-phospho-beta-D-ribosyl)acetamidine + ATP = 5-amino-1-(5-phospho-beta-D-ribosyl)imidazole + ADP + phosphate + H(+). It functions in the pathway purine metabolism; IMP biosynthesis via de novo pathway; 5-amino-1-(5-phospho-D-ribosyl)imidazole from N(2)-formyl-N(1)-(5-phospho-D-ribosyl)glycinamide: step 2/2. This Streptococcus agalactiae serotype V (strain ATCC BAA-611 / 2603 V/R) protein is Phosphoribosylformylglycinamidine cyclo-ligase.